Reading from the N-terminus, the 121-residue chain is Large ribosomal subunit protein uL18 (121 aa).

This sequence belongs to the universal ribosomal protein uL18 family. In terms of assembly, part of the 50S ribosomal subunit; part of the 5S rRNA/L5/L18/L25 subcomplex. Contacts the 5S and 23S rRNAs.

This is one of the proteins that bind and probably mediate the attachment of the 5S RNA into the large ribosomal subunit, where it forms part of the central protuberance. This is Large ribosomal subunit protein uL18 from Mesomycoplasma hyopneumoniae (strain 232) (Mycoplasma hyopneumoniae).